Reading from the N-terminus, the 184-residue chain is Isopentenyl-diphosphate Delta-isomerase (184 aa).

Histidine 26 and histidine 33 together coordinate Mn(2+). In terms of domain architecture, Nudix hydrolase spans 31–165 (PLHLAFSCYL…PSAFSPWLGL (135 aa)). Cysteine 68 is an active-site residue. Histidine 70 contacts Mn(2+). Glutamate 88 is a binding site for Mg(2+). Positions 115 and 117 each coordinate Mn(2+). The active site involves glutamate 117.

It belongs to the IPP isomerase type 1 family. The cofactor is Mg(2+). Requires Mn(2+) as cofactor.

The protein localises to the cytoplasm. It catalyses the reaction isopentenyl diphosphate = dimethylallyl diphosphate. It functions in the pathway isoprenoid biosynthesis; dimethylallyl diphosphate biosynthesis; dimethylallyl diphosphate from isopentenyl diphosphate: step 1/1. In terms of biological role, catalyzes the 1,3-allylic rearrangement of the homoallylic substrate isopentenyl (IPP) to its highly electrophilic allylic isomer, dimethylallyl diphosphate (DMAPP). The sequence is that of Isopentenyl-diphosphate Delta-isomerase from Paenarthrobacter aurescens (strain TC1).